A 98-amino-acid polypeptide reads, in one-letter code: Histone H4-1 (98 aa).

The segment covering 1–14 has biased composition (gly residues); sequence MGGKGGKGGKGLGK. The disordered stretch occupies residues 1-20; the sequence is MGGKGGKGGKGLGKVGAKKR.

Belongs to the histone H4 family. In terms of assembly, the nucleosome is a histone octamer containing two molecules each of H2A, H2B, H3 and H4 assembled in one H3-H4 heterotetramer and two H2A-H2B heterodimers. The octamer wraps approximately 147 bp of DNA.

The protein resides in the nucleus. Its subcellular location is the chromosome. Its function is as follows. Core component of nucleosome. Nucleosomes wrap and compact DNA into chromatin, limiting DNA accessibility to the cellular machineries which require DNA as a template. Histones thereby play a central role in transcription regulation, DNA repair, DNA replication and chromosomal stability. DNA accessibility is regulated via a complex set of post-translational modifications of histones, also called histone code, and nucleosome remodeling. The polypeptide is Histone H4-1 (Blepharisma japonicum).